An 886-amino-acid polypeptide reads, in one-letter code: General transcription factor 3C polypeptide 3 (886 aa).

The disordered stretch occupies residues 1-121 (MSGFSPELID…TPEQPTAGDV (121 aa)). S2 is modified (N-acetylserine). The span at 12–44 (LEGKISFEEFERRREERKTREKKSLQEKGKLSA) shows a compositional bias: basic and acidic residues. S43 is modified (phosphoserine). The span at 53 to 63 (VPSSSGINSTK) shows a compositional bias: polar residues. Acidic residues predominate over residues 92–113 (ENEDDEEEEEEEEEEEEEEETP). TPR repeat units lie at residues 149 to 182 (LRGL…APLA), 183 to 216 (YEPF…NPSD), 217 to 250 (TEEW…EPTN), 252 to 284 (RYLW…LSPS), 290 to 323 (MQLA…HQGL), 326 to 361 (MEDV…EKKT), 421 to 454 (GDLY…ERYN), 456 to 489 (AVVW…APLH), 491 to 523 (DARI…DTLA), 733 to 766 (HALC…HPDE), and 811 to 844 (QESF…PPLV). S282 is subject to Phosphoserine.

In terms of assembly, part of the TFIIIC subcomplex TFIIIC2, consisting of six subunits, GTF3C1, GTF3C2, GTF3C3, GTF3C4, GTF3C5 and GTF3C6. Interacts with BRF1 and TBP.

The protein resides in the nucleus. Involved in RNA polymerase III-mediated transcription. Integral, tightly associated component of the DNA-binding TFIIIC2 subcomplex that directly binds tRNA and virus-associated RNA promoters. The chain is General transcription factor 3C polypeptide 3 (GTF3C3) from Homo sapiens (Human).